The primary structure comprises 384 residues: Isoafricanol synthase (384 aa).

The Mg(2+) site is built by D95, N245, S249, and E253.

The protein belongs to the terpene synthase family. The cofactor is Mg(2+).

It catalyses the reaction (2E,6E)-farnesyl diphosphate + H2O = (+)-isoafricanol + diphosphate. Catalyzes the cyclization of farnesyl diphosphate (FPP) to isoafricanol. This chain is Isoafricanol synthase, found in Streptomyces violaceusniger (strain Tu 4113).